A 252-amino-acid polypeptide reads, in one-letter code: MLKKRIIPCLDVKDGRVVKGINFVNLTDVGDPVDAAKAYYEAGCDELVFLDITATHEERDTTVEMVRRVAEQVFIPFTVGGGIRTVEDMKRMLQAGADKVAVNSSALANPQLLADCAEKFGSQCVVLAVDAKKEADGSWHVYLAGGRKDSGRDLLDWVQEAVSLGAGEILLTSMDKDGTKSGFDLPMLEAVSQVVSVPIIASGGAGSSQHILEVFEKTAATGALAASIFHYGQVSIAETKKAMQAAGLEVRI.

Residues Asp-11 and Asp-130 contribute to the active site.

This sequence belongs to the HisA/HisF family. In terms of assembly, heterodimer of HisH and HisF.

It is found in the cytoplasm. It carries out the reaction 5-[(5-phospho-1-deoxy-D-ribulos-1-ylimino)methylamino]-1-(5-phospho-beta-D-ribosyl)imidazole-4-carboxamide + L-glutamine = D-erythro-1-(imidazol-4-yl)glycerol 3-phosphate + 5-amino-1-(5-phospho-beta-D-ribosyl)imidazole-4-carboxamide + L-glutamate + H(+). It functions in the pathway amino-acid biosynthesis; L-histidine biosynthesis; L-histidine from 5-phospho-alpha-D-ribose 1-diphosphate: step 5/9. Functionally, IGPS catalyzes the conversion of PRFAR and glutamine to IGP, AICAR and glutamate. The HisF subunit catalyzes the cyclization activity that produces IGP and AICAR from PRFAR using the ammonia provided by the HisH subunit. The sequence is that of Imidazole glycerol phosphate synthase subunit HisF from Streptococcus sanguinis (strain SK36).